We begin with the raw amino-acid sequence, 197 residues long: Sodium/potassium-transporting ATPase subunit beta-1-interacting protein 3 (197 aa).

A run of 4 helical transmembrane segments spans residues 2–22 (GCCT…VSAL), 35–55 (APIL…FGTI), 62–82 (IMVY…IICF), and 152–172 (VQIL…SISM).

The protein belongs to the NKAIN family. As to quaternary structure, interacts with ATP1B1.

The protein resides in the cell membrane. The protein is Sodium/potassium-transporting ATPase subunit beta-1-interacting protein 3 (NKAIN3) of Homo sapiens (Human).